Consider the following 128-residue polypeptide: Small ribosomal subunit protein uS13 (128 aa).

The disordered stretch occupies residues 97-128 (PVRGQRTRSNARTRKGPRPSRIKTKKKKEQTV). Residues 101–128 (QRTRSNARTRKGPRPSRIKTKKKKEQTV) show a composition bias toward basic residues.

It belongs to the universal ribosomal protein uS13 family. As to quaternary structure, part of the 30S ribosomal subunit. Forms a loose heterodimer with protein S19. Forms two bridges to the 50S subunit in the 70S ribosome.

Its function is as follows. Located at the top of the head of the 30S subunit, it contacts several helices of the 16S rRNA. In the 70S ribosome it contacts the 23S rRNA (bridge B1a) and protein L5 of the 50S subunit (bridge B1b), connecting the 2 subunits; these bridges are implicated in subunit movement. Contacts the tRNAs in the A and P-sites. The chain is Small ribosomal subunit protein uS13 from Pseudothermotoga lettingae (strain ATCC BAA-301 / DSM 14385 / NBRC 107922 / TMO) (Thermotoga lettingae).